We begin with the raw amino-acid sequence, 244 residues long: 3-oxoacyl-[acyl-carrier-protein] reductase FabG (244 aa).

Residues 12–15 (GANQ) and Thr37 each bind NADP(+). Ca(2+)-binding residues include Glu50 and Gly53. Residues 59–60 (NL) and Asn86 each bind NADP(+). Ser138 is a binding site for substrate. Asn145 contributes to the Ca(2+) binding site. Catalysis depends on Tyr151, which acts as the Proton acceptor. NADP(+)-binding positions include 151 to 155 (YSASK) and Ile184. Thr234 contributes to the Ca(2+) binding site.

The protein belongs to the short-chain dehydrogenases/reductases (SDR) family. In terms of assembly, homotetramer.

It carries out the reaction a (3R)-hydroxyacyl-[ACP] + NADP(+) = a 3-oxoacyl-[ACP] + NADPH + H(+). Its pathway is lipid metabolism; fatty acid biosynthesis. Catalyzes the NADPH-dependent reduction of beta-ketoacyl-ACP substrates to beta-hydroxyacyl-ACP products, the first reductive step in the elongation cycle of fatty acid biosynthesis. This is 3-oxoacyl-[acyl-carrier-protein] reductase FabG (fabG) from Buchnera aphidicola subsp. Acyrthosiphon pisum (strain APS) (Acyrthosiphon pisum symbiotic bacterium).